The sequence spans 266 residues: Glutamate racemase (266 aa).

Residues 9-10 (DS) and 41-42 (YG) contribute to the substrate site. Catalysis depends on Cys-73, which acts as the Proton donor/acceptor. 74 to 75 (NT) provides a ligand contact to substrate. The active-site Proton donor/acceptor is the Cys-183. 184 to 185 (TH) serves as a coordination point for substrate.

Belongs to the aspartate/glutamate racemases family.

It catalyses the reaction L-glutamate = D-glutamate. Its pathway is cell wall biogenesis; peptidoglycan biosynthesis. In terms of biological role, provides the (R)-glutamate required for cell wall biosynthesis. The polypeptide is Glutamate racemase (Shewanella woodyi (strain ATCC 51908 / MS32)).